Reading from the N-terminus, the 141-residue chain is NADH-quinone oxidoreductase subunit A (141 aa).

3 consecutive transmembrane segments (helical) span residues Leu-24–Ala-44, Val-77–Ala-97, and Leu-106–Ile-126.

This sequence belongs to the complex I subunit 3 family. NDH-1 is composed of 14 different subunits. Subunits NuoA, H, J, K, L, M, N constitute the membrane sector of the complex.

The protein resides in the cell inner membrane. It catalyses the reaction a quinone + NADH + 5 H(+)(in) = a quinol + NAD(+) + 4 H(+)(out). In terms of biological role, NDH-1 shuttles electrons from NADH, via FMN and iron-sulfur (Fe-S) centers, to quinones in the respiratory chain. The immediate electron acceptor for the enzyme in this species is believed to be ubiquinone. Couples the redox reaction to proton translocation (for every two electrons transferred, four hydrogen ions are translocated across the cytoplasmic membrane), and thus conserves the redox energy in a proton gradient. This Syntrophotalea carbinolica (strain DSM 2380 / NBRC 103641 / GraBd1) (Pelobacter carbinolicus) protein is NADH-quinone oxidoreductase subunit A.